A 129-amino-acid polypeptide reads, in one-letter code: NADH-quinone oxidoreductase subunit A (129 aa).

3 consecutive transmembrane segments (helical) span residues 9-29 (FPIG…LGLA), 68-88 (LLFI…VLLL), and 97-117 (LGWP…AGLV).

The protein belongs to the complex I subunit 3 family. In terms of assembly, NDH-1 is composed of 14 different subunits. Subunits NuoA, H, J, K, L, M, N constitute the membrane sector of the complex.

The protein resides in the cell inner membrane. The enzyme catalyses a quinone + NADH + 5 H(+)(in) = a quinol + NAD(+) + 4 H(+)(out). Its function is as follows. NDH-1 shuttles electrons from NADH, via FMN and iron-sulfur (Fe-S) centers, to quinones in the respiratory chain. The immediate electron acceptor for the enzyme in this species is believed to be ubiquinone. Couples the redox reaction to proton translocation (for every two electrons transferred, four hydrogen ions are translocated across the cytoplasmic membrane), and thus conserves the redox energy in a proton gradient. This Anaeromyxobacter sp. (strain K) protein is NADH-quinone oxidoreductase subunit A.